Consider the following 131-residue polypeptide: Single-stranded DNA-binding protein 1 (131 aa).

In terms of domain architecture, SSB spans 1–103 (MYNKVIAIGR…VLCQSFQLLE (103 aa)).

Homotetramer.

The chain is Single-stranded DNA-binding protein 1 (ssb1) from Streptococcus pyogenes serotype M6 (strain ATCC BAA-946 / MGAS10394).